Here is a 215-residue protein sequence, read N- to C-terminus: Fanconi anemia core complex-associated protein 24 (215 aa).

Belongs to the multisubunit FA complex composed of FANCA, FANCB, FANCC, FANCE, FANCF, FANCG, FANCL/PHF9, FANCM and FAAP24. Interacts with FANCM.

The protein localises to the nucleus. In terms of biological role, plays a role in DNA repair through recruitment of the FA core complex to damaged DNA. Regulates FANCD2 monoubiquitination upon DNA damage. Induces chromosomal instability as well as hypersensitivity to DNA cross-linking agents, when repressed. Targets FANCM/FAAP24 complex to the DNA, preferentially to single strand DNA. This is Fanconi anemia core complex-associated protein 24 from Bos taurus (Bovine).